Here is a 217-residue protein sequence, read N- to C-terminus: 3,4-dihydroxy-2-butanone 4-phosphate synthase (217 aa).

D-ribulose 5-phosphate contacts are provided by residues Arg37–Glu38, Asp42, Arg150–Thr154, and Glu174. Glu38 contributes to the Mg(2+) binding site. His153 provides a ligand contact to Mg(2+).

The protein belongs to the DHBP synthase family. Homodimer. Mg(2+) serves as cofactor. The cofactor is Mn(2+).

It carries out the reaction D-ribulose 5-phosphate = (2S)-2-hydroxy-3-oxobutyl phosphate + formate + H(+). It functions in the pathway cofactor biosynthesis; riboflavin biosynthesis; 2-hydroxy-3-oxobutyl phosphate from D-ribulose 5-phosphate: step 1/1. In terms of biological role, catalyzes the conversion of D-ribulose 5-phosphate to formate and 3,4-dihydroxy-2-butanone 4-phosphate. The sequence is that of 3,4-dihydroxy-2-butanone 4-phosphate synthase from Pectobacterium carotovorum subsp. carotovorum (strain PC1).